The chain runs to 161 residues: S-ribosylhomocysteine lyase (161 aa).

3 residues coordinate Fe cation: H58, H62, and C128.

Belongs to the LuxS family. In terms of assembly, homodimer. It depends on Fe cation as a cofactor.

It catalyses the reaction S-(5-deoxy-D-ribos-5-yl)-L-homocysteine = (S)-4,5-dihydroxypentane-2,3-dione + L-homocysteine. In terms of biological role, involved in the synthesis of autoinducer 2 (AI-2) which is secreted by bacteria and is used to communicate both the cell density and the metabolic potential of the environment. The regulation of gene expression in response to changes in cell density is called quorum sensing. Catalyzes the transformation of S-ribosylhomocysteine (RHC) to homocysteine (HC) and 4,5-dihydroxy-2,3-pentadione (DPD). The chain is S-ribosylhomocysteine lyase from Bifidobacterium adolescentis (strain ATCC 15703 / DSM 20083 / NCTC 11814 / E194a).